A 136-amino-acid polypeptide reads, in one-letter code: ATP synthase F(0) complex subunit C1, mitochondrial (136 aa).

The transit peptide at 1–61 (MQTAGALFIS…REFQTSVVSR (61 aa)) directs the protein to the mitochondrion. Residues 77-97 (VGVAGSGAGIGTVFGSLIIGY) form a helical membrane-spanning segment. Lys-104 carries the N6,N6,N6-trimethyllysine modification. Residues 112–132 (ILGFALSEAMGLFCLMVAFLI) traverse the membrane as a helical segment.

This sequence belongs to the ATPase C chain family. As to quaternary structure, homooctamer; the c-ring consists of eight c subunits forming a circle, and each subunit adopts a hairpin shape. Component of the ATP synthase complex composed at least of ATP5F1A/subunit alpha, ATP5F1B/subunit beta, ATP5MC1/subunit c (homooctomer), MT-ATP6/subunit a, MT-ATP8/subunit 8, ATP5ME/subunit e, ATP5MF/subunit f, ATP5MG/subunit g, ATP5MK/subunit k, ATP5MJ/subunit j, ATP5F1C/subunit gamma, ATP5F1D/subunit delta, ATP5F1E/subunit epsilon, ATP5PF/subunit F6, ATP5PB/subunit b, ATP5PD/subunit d, ATP5PO/subunit OSCP. ATP synthase complex consists of a soluble F(1) head domain (subunits alpha(3) and beta(3)) - the catalytic core - and a membrane F(0) domain - the membrane proton channel (subunits c, a, 8, e, f, g, k and j). These two domains are linked by a central stalk (subunits gamma, delta, and epsilon) rotating inside the F1 region and a stationary peripheral stalk (subunits F6, b, d, and OSCP). Interacts with TMEM70 (homooligomer form); this interaction facilitates the oligomer formation of subunit c/ATP5MC1 (c-ring) and the c-ring membrane insertion and also protects ATP5MC1 against intramitochondrial proteolysis. In terms of processing, trimethylated by ATPSCKMT at Lys-104. Methylation is required for proper incorporation of the C subunit into the ATP synthase complex and mitochondrial respiration.

It is found in the mitochondrion membrane. The enzyme catalyses H(+)(in) = H(+)(out). Subunit c, of the mitochondrial membrane ATP synthase complex (F(1)F(0) ATP synthase or Complex V) that produces ATP from ADP in the presence of a proton gradient across the membrane which is generated by electron transport complexes of the respiratory chain. ATP synthase complex consist of a soluble F(1) head domain - the catalytic core - and a membrane F(1) domain - the membrane proton channel. These two domains are linked by a central stalk rotating inside the F(1) region and a stationary peripheral stalk. During catalysis, ATP synthesis in the catalytic domain of F(1) is coupled via a rotary mechanism of the central stalk subunits to proton translocation. With the subunit a (MT-ATP6), forms the proton-conducting channel in the F(0) domain, that contains two crucial half-channels (inlet and outlet) that facilitate proton movement from the mitochondrial intermembrane space (IMS) into the matrix. Protons are taken up via the inlet half-channel and released through the outlet half-channel, following a Grotthuss mechanism. This chain is ATP synthase F(0) complex subunit C1, mitochondrial, found in Homo sapiens (Human).